The chain runs to 309 residues: Ribose-phosphate pyrophosphokinase (309 aa).

Residues 42–44 (DEE) and 102–103 (RQ) each bind ATP. 2 residues coordinate Mg(2+): His136 and Asp175. The active site involves Lys199. D-ribose 5-phosphate contacts are provided by residues Arg201, Asp226, and 230–234 (STGGT).

The protein belongs to the ribose-phosphate pyrophosphokinase family. Class III (archaeal) subfamily. Mg(2+) is required as a cofactor.

The protein localises to the cytoplasm. It carries out the reaction D-ribose 5-phosphate + ATP = 5-phospho-alpha-D-ribose 1-diphosphate + AMP + H(+). Its pathway is metabolic intermediate biosynthesis; 5-phospho-alpha-D-ribose 1-diphosphate biosynthesis; 5-phospho-alpha-D-ribose 1-diphosphate from D-ribose 5-phosphate (route I): step 1/1. In terms of biological role, involved in the biosynthesis of the central metabolite phospho-alpha-D-ribosyl-1-pyrophosphate (PRPP) via the transfer of pyrophosphoryl group from ATP to 1-hydroxyl of ribose-5-phosphate (Rib-5-P). The polypeptide is Ribose-phosphate pyrophosphokinase (Aeropyrum pernix (strain ATCC 700893 / DSM 11879 / JCM 9820 / NBRC 100138 / K1)).